A 149-amino-acid polypeptide reads, in one-letter code: Heat shock protein beta-3 (149 aa).

One can recognise a sHSP domain in the interval 47-149 (KARAAQAPPV…VEVKDSAGTK (103 aa)).

The protein belongs to the small heat shock protein (HSP20) family.

Its subcellular location is the cytoplasm. The protein localises to the nucleus. Inhibitor of actin polymerization. This chain is Heat shock protein beta-3 (HSPB3), found in Bos taurus (Bovine).